Consider the following 305-residue polypeptide: Aspartate carbamoyltransferase catalytic subunit (305 aa).

Residues Arg54 and Thr55 each coordinate carbamoyl phosphate. Lys83 provides a ligand contact to L-aspartate. Residues Arg104, His132, and Gln135 each contribute to the carbamoyl phosphate site. L-aspartate contacts are provided by Arg165 and Arg226. Carbamoyl phosphate-binding residues include Leu265 and Pro266.

It belongs to the aspartate/ornithine carbamoyltransferase superfamily. ATCase family. In terms of assembly, heterooligomer of catalytic and regulatory chains.

The enzyme catalyses carbamoyl phosphate + L-aspartate = N-carbamoyl-L-aspartate + phosphate + H(+). Its pathway is pyrimidine metabolism; UMP biosynthesis via de novo pathway; (S)-dihydroorotate from bicarbonate: step 2/3. In terms of biological role, catalyzes the condensation of carbamoyl phosphate and aspartate to form carbamoyl aspartate and inorganic phosphate, the committed step in the de novo pyrimidine nucleotide biosynthesis pathway. This Pyrobaculum calidifontis (strain DSM 21063 / JCM 11548 / VA1) protein is Aspartate carbamoyltransferase catalytic subunit.